A 623-amino-acid polypeptide reads, in one-letter code: DNA polymerase alpha subunit B (623 aa).

Residues 113–151 (IPKIKDEPSSSVDVSTARNKNNHNNNNNNNPSLPNKSMF) form a disordered region. Over residues 121-130 (SSSVDVSTAR) the composition is skewed to polar residues.

Belongs to the DNA polymerase alpha subunit B family. In terms of assembly, DNA polymerase alpha:primase is a four subunit enzyme complex, which is assembled throughout the cell cycle, and consists of the two DNA polymerase subunits A and B, and the DNA primase large and small subunits. Subunit B binds to subunit A.

It is found in the nucleus. Its function is as follows. May play an essential role at the early stage of chromosomal DNA replication by coupling the polymerase alpha/primase complex to the cellular replication machinery. This is DNA polymerase alpha subunit B (polA2) from Dictyostelium discoideum (Social amoeba).